We begin with the raw amino-acid sequence, 595 residues long: Putative capsid protein V20 (595 aa).

It localises to the virion. Its function is as follows. May self assemble to form an icosahedral capsid. Most abundant protein in the virion. This chain is Putative capsid protein V20, found in Sputnik virophage.